The following is a 90-amino-acid chain: U7-theraphotoxin-Hhn1a 4 (90 aa).

The first 19 residues, 1–19, serve as a signal peptide directing secretion; sequence MKTAIFTVVLALAVFAVLS. The propeptide occupies 20–50; the sequence is FGWEANEEALSEEFTELIHEKEAASETEARE. Cystine bridges form between Cys-51–Cys-65, Cys-58–Cys-70, and Cys-64–Cys-81.

This sequence belongs to the neurotoxin 10 (Hwtx-1) family. 13 (Hntx-13) subfamily. In terms of tissue distribution, expressed by the venom gland.

The protein localises to the secreted. Functionally, ion channel inhibitor. The chain is U7-theraphotoxin-Hhn1a 4 from Cyriopagopus hainanus (Chinese bird spider).